A 459-amino-acid polypeptide reads, in one-letter code: Ribulose bisphosphate carboxylase large chain (459 aa).

The residue at position 4 (Lys4) is an N6,N6,N6-trimethyllysine. Residues Asn113 and Thr163 each coordinate substrate. Lys165 (proton acceptor) is an active-site residue. Position 167 (Lys167) interacts with substrate. Lys191, Asp193, and Glu194 together coordinate Mg(2+). Position 191 is an N6-carboxylysine (Lys191). Catalysis depends on His284, which acts as the Proton acceptor. The substrate site is built by Arg285, His317, and Ser369.

The protein belongs to the RuBisCO large chain family. Type I subfamily. In terms of assembly, heterohexadecamer of 8 large chains and 8 small chains; disulfide-linked. The disulfide link is formed within the large subunit homodimers. Mg(2+) is required as a cofactor. Post-translationally, the disulfide bond which can form in the large chain dimeric partners within the hexadecamer appears to be associated with oxidative stress and protein turnover.

It localises to the plastid. The protein localises to the chloroplast. It carries out the reaction 2 (2R)-3-phosphoglycerate + 2 H(+) = D-ribulose 1,5-bisphosphate + CO2 + H2O. It catalyses the reaction D-ribulose 1,5-bisphosphate + O2 = 2-phosphoglycolate + (2R)-3-phosphoglycerate + 2 H(+). Functionally, ruBisCO catalyzes two reactions: the carboxylation of D-ribulose 1,5-bisphosphate, the primary event in carbon dioxide fixation, as well as the oxidative fragmentation of the pentose substrate in the photorespiration process. Both reactions occur simultaneously and in competition at the same active site. The polypeptide is Ribulose bisphosphate carboxylase large chain (Cephalotus follicularis (Albany pitcher plant)).